The chain runs to 75 residues: Defensin J1-1 (75 aa).

Positions 1–27 are cleaved as a signal peptide; it reads MAGFSKVVATIFLMMLLVFATDMMAEA. Intrachain disulfides connect cysteine 30–cysteine 74, cysteine 41–cysteine 61, cysteine 47–cysteine 68, and cysteine 51–cysteine 70.

This sequence belongs to the DEFL family. As to quaternary structure, monomer. Expressed in orange and red ripe fruit and to a lesser extent in mature, green fruit. Present in trace in young, green fruit.

The protein localises to the secreted. Plant defense peptide with antifungal activity against F.oxysporum and B.cinerea. This Capsicum annuum (Capsicum pepper) protein is Defensin J1-1.